The sequence spans 78 residues: MEFKQEVLDVLAEVCQEDAVKENPDIEIFEEGLLDSFGTVELLVAIENRFGITVPITEFDRDEWNTPNNIVNKLTELK.

One can recognise a Carrier domain in the interval 1–78 (MEFKQEVLDV…NIVNKLTELK (78 aa)). The residue at position 36 (serine 36) is an O-(pantetheine 4'-phosphoryl)serine.

It belongs to the DltC family. Post-translationally, 4'-phosphopantetheine is transferred from CoA to a specific serine of apo-DCP.

It is found in the cytoplasm. The protein operates within cell wall biogenesis; lipoteichoic acid biosynthesis. Functionally, carrier protein involved in the D-alanylation of lipoteichoic acid (LTA). The loading of thioester-linked D-alanine onto DltC is catalyzed by D-alanine--D-alanyl carrier protein ligase DltA. The DltC-carried D-alanyl group is further transferred to cell membrane phosphatidylglycerol (PG) by forming an ester bond, probably catalyzed by DltD. D-alanylation of LTA plays an important role in modulating the properties of the cell wall in Gram-positive bacteria, influencing the net charge of the cell wall. This chain is D-alanyl carrier protein, found in Bacillus velezensis (strain DSM 23117 / BGSC 10A6 / LMG 26770 / FZB42) (Bacillus amyloliquefaciens subsp. plantarum).